Here is a 472-residue protein sequence, read N- to C-terminus: Sad1-interacting factor 3 (472 aa).

Disordered regions lie at residues 1–47 and 197–223; these read MSTK…PRFG and SSGP…DKPD. At 1–443 the chain is on the lumenal side; it reads MSTKDKLNLP…KSSADRKMNS (443 aa). Positions 30–40 are enriched in polar residues; sequence NSESTRITPQH. S42 carries the phosphoserine modification. The chain crosses the membrane as a helical span at residues 444 to 464; the sequence is ITWIIIILISLFVIIFTLEVI. The Cytoplasmic portion of the chain corresponds to 465-472; the sequence is LRLRWAHR.

Belongs to the RMD1/sif2 family. Interacts with sad1.

Its subcellular location is the nucleus membrane. This is Sad1-interacting factor 3 (sif3) from Schizosaccharomyces pombe (strain 972 / ATCC 24843) (Fission yeast).